The primary structure comprises 145 residues: Superoxide dismutase [Mn/Fe] (145 aa).

Positions 10 and 64 each coordinate Fe(3+). Residues His10 and His64 each contribute to the Mn(2+) site.

The protein belongs to the iron/manganese superoxide dismutase family. Mn(2+) is required as a cofactor. Requires Fe(3+) as cofactor.

It carries out the reaction 2 superoxide + 2 H(+) = H2O2 + O2. Functionally, destroys superoxide anion radicals which are normally produced within the cells and which are toxic to biological systems. Catalyzes the dismutation of superoxide anion radicals into O2 and H2O2 by successive reduction and oxidation of the transition metal ion at the active site. The chain is Superoxide dismutase [Mn/Fe] (sodA) from Streptococcus porcinus.